Consider the following 301-residue polypeptide: Probable alpha-L-glutamate ligase (301 aa).

The ATP-grasp domain maps to 104–287 (LQLMSRKGLG…VASMIIKHIE (184 aa)). ATP-binding positions include lysine 141, 178–179 (EY), aspartate 187, and 211–213 (RSN). The Mg(2+) site is built by aspartate 248, glutamate 260, and asparagine 262. Mn(2+) is bound by residues aspartate 248, glutamate 260, and asparagine 262.

Belongs to the RimK family. Mg(2+) is required as a cofactor. Mn(2+) serves as cofactor.

This Marinomonas sp. (strain MWYL1) protein is Probable alpha-L-glutamate ligase.